The following is a 320-amino-acid chain: ATP-dependent 6-phosphofructokinase (320 aa).

Gly12 provides a ligand contact to ATP. Residues 22–26 (RGVVR) and 55–60 (RYSVSD) contribute to the ADP site. ATP-binding positions include 73–74 (RF) and 103–106 (GDGS). Asp104 contacts Mg(2+). Substrate is bound at residue 126–128 (TID). Asp128 (proton acceptor) is an active-site residue. Arg155 contacts ADP. Substrate is bound by residues Arg163 and 170-172 (MGR). Residues 186-188 (GCE), Lys212, and 214-216 (KKH) each bind ADP. Residues Glu223, Arg244, and 250–253 (HIQR) each bind substrate.

The protein belongs to the phosphofructokinase type A (PFKA) family. ATP-dependent PFK group I subfamily. Prokaryotic clade 'B1' sub-subfamily. As to quaternary structure, homotetramer. The cofactor is Mg(2+).

It is found in the cytoplasm. The catalysed reaction is beta-D-fructose 6-phosphate + ATP = beta-D-fructose 1,6-bisphosphate + ADP + H(+). It participates in carbohydrate degradation; glycolysis; D-glyceraldehyde 3-phosphate and glycerone phosphate from D-glucose: step 3/4. Its activity is regulated as follows. Allosterically activated by ADP and other diphosphonucleosides, and allosterically inhibited by phosphoenolpyruvate. In terms of biological role, catalyzes the phosphorylation of D-fructose 6-phosphate to fructose 1,6-bisphosphate by ATP, the first committing step of glycolysis. In Cronobacter sakazakii (strain ATCC BAA-894) (Enterobacter sakazakii), this protein is ATP-dependent 6-phosphofructokinase.